The following is a 38-amino-acid chain: Toxin Bot33 (38 aa).

3 disulfide bridges follow: Cys8–Cys28, Cys14–Cys33, and Cys18–Cys35.

The protein belongs to the short scorpion toxin superfamily. Potassium channel inhibitor family. Expressed by the venom gland.

It is found in the secreted. Its function is as follows. A probable toxin that has no activity on the tested mammalian voltage-gated potassium channels (when tested at 1 uM) and is not toxic to mice. It resembles alpha toxins that block voltage-gated potassium channels. This chain is Toxin Bot33, found in Buthus occitanus tunetanus (Common European scorpion).